The following is a 161-amino-acid chain: NADH-quinone oxidoreductase subunit I (161 aa).

4Fe-4S ferredoxin-type domains lie at 53–82 and 92–121; these read RRYPSGEERCIACKLCEAICPAQAITIEAE and TRYDIDMVKCIYCGFCQEACPVDAIVEGPN. Cys62, Cys65, Cys68, Cys72, Cys101, Cys104, Cys107, and Cys111 together coordinate [4Fe-4S] cluster.

The protein belongs to the complex I 23 kDa subunit family. As to quaternary structure, NDH-1 is composed of 14 different subunits. Subunits NuoA, H, J, K, L, M, N constitute the membrane sector of the complex. Requires [4Fe-4S] cluster as cofactor.

Its subcellular location is the cell inner membrane. It catalyses the reaction a quinone + NADH + 5 H(+)(in) = a quinol + NAD(+) + 4 H(+)(out). Functionally, NDH-1 shuttles electrons from NADH, via FMN and iron-sulfur (Fe-S) centers, to quinones in the respiratory chain. The immediate electron acceptor for the enzyme in this species is believed to be ubiquinone. Couples the redox reaction to proton translocation (for every two electrons transferred, four hydrogen ions are translocated across the cytoplasmic membrane), and thus conserves the redox energy in a proton gradient. This is NADH-quinone oxidoreductase subunit I from Hyphomonas neptunium (strain ATCC 15444).